Here is a 202-residue protein sequence, read N- to C-terminus: Small ribosomal subunit protein uS4c (202 aa).

In terms of domain architecture, S4 RNA-binding spans 90 to 158; sequence MRSDNVIFRL…ISKNIELYQK (69 aa).

This sequence belongs to the universal ribosomal protein uS4 family. Part of the 30S ribosomal subunit. Contacts protein S5. The interaction surface between S4 and S5 is involved in control of translational fidelity.

It is found in the plastid. The protein resides in the chloroplast. Functionally, one of the primary rRNA binding proteins, it binds directly to 16S rRNA where it nucleates assembly of the body of the 30S subunit. With S5 and S12 plays an important role in translational accuracy. In Anthoceros punctatus (Hornwort), this protein is Small ribosomal subunit protein uS4c (rps4).